The primary structure comprises 447 residues: Argininosuccinate synthase (447 aa).

Residues 17-25 and A43 each bind ATP; that span reads AFSGGLDTS. Residue Y99 coordinates L-citrulline. The ATP site is built by G129 and T131. T131, N135, and D136 together coordinate L-aspartate. Residue N135 coordinates L-citrulline. Residue D136 coordinates ATP. L-citrulline-binding residues include R139 and S192. An ATP-binding site is contributed by D194. L-citrulline contacts are provided by T201, E203, and E280.

This sequence belongs to the argininosuccinate synthase family. Type 2 subfamily. In terms of assembly, homotetramer.

It localises to the cytoplasm. It carries out the reaction L-citrulline + L-aspartate + ATP = 2-(N(omega)-L-arginino)succinate + AMP + diphosphate + H(+). It functions in the pathway amino-acid biosynthesis; L-arginine biosynthesis; L-arginine from L-ornithine and carbamoyl phosphate: step 2/3. The chain is Argininosuccinate synthase from Escherichia coli (strain K12 / MC4100 / BW2952).